A 475-amino-acid polypeptide reads, in one-letter code: Ribulose bisphosphate carboxylase large chain (475 aa).

Positions 1–2 (MS) are excised as a propeptide. Residue Pro-3 is modified to N-acetylproline. The residue at position 14 (Lys-14) is an N6,N6,N6-trimethyllysine. Positions 123 and 173 each coordinate substrate. Lys-175 (proton acceptor) is an active-site residue. Lys-177 is a substrate binding site. Mg(2+) contacts are provided by Lys-201, Asp-203, and Glu-204. Lys-201 carries the post-translational modification N6-carboxylysine. His-294 functions as the Proton acceptor in the catalytic mechanism. Positions 295, 327, and 379 each coordinate substrate.

Belongs to the RuBisCO large chain family. Type I subfamily. In terms of assembly, heterohexadecamer of 8 large chains and 8 small chains; disulfide-linked. The disulfide link is formed within the large subunit homodimers. It depends on Mg(2+) as a cofactor. In terms of processing, the disulfide bond which can form in the large chain dimeric partners within the hexadecamer appears to be associated with oxidative stress and protein turnover.

The protein localises to the plastid. It is found in the chloroplast. The enzyme catalyses 2 (2R)-3-phosphoglycerate + 2 H(+) = D-ribulose 1,5-bisphosphate + CO2 + H2O. It carries out the reaction D-ribulose 1,5-bisphosphate + O2 = 2-phosphoglycolate + (2R)-3-phosphoglycerate + 2 H(+). Functionally, ruBisCO catalyzes two reactions: the carboxylation of D-ribulose 1,5-bisphosphate, the primary event in carbon dioxide fixation, as well as the oxidative fragmentation of the pentose substrate in the photorespiration process. Both reactions occur simultaneously and in competition at the same active site. The polypeptide is Ribulose bisphosphate carboxylase large chain (Pinus longaeva (Great Basin bristlecone pine)).